Reading from the N-terminus, the 507-residue chain is RNA-binding protein MEX3B (507 aa).

Residues 1 to 22 (MPSSLFADMERNGSGGGGGETL) are disordered. 2 KH domains span residues 59 to 120 (MTEC…RREI) and 155 to 216 (QTTI…REEI). 2 disordered regions span residues 256–279 (NQSS…LGSA) and 426–450 (SSSS…GMRR). Residues 426–446 (SSSSSSSSSSSSSSSSSSSSS) are compositionally biased toward low complexity. The RING-type zinc-finger motif lies at 456–496 (CSICFESEVIAALVPCGHNLFCMECANRICEKNQPQCPVCH).

The protein resides in the cytoplasm. Its subcellular location is the nucleus. It localises to the cytoplasmic granule. It is found in the P-body. Functionally, RNA-binding protein. May be involved in post-transcriptional regulatory mechanisms. In Xenopus laevis (African clawed frog), this protein is RNA-binding protein MEX3B (mex3b).